Reading from the N-terminus, the 393-residue chain is Chorismate synthase (393 aa).

R40 and R46 together coordinate NADP(+). FMN contacts are provided by residues 135-137, 257-258, G301, 316-320, and R342; these read RAS, QA, and KPIAT. The interval 280 to 306 is disordered; it reads DEIDVGPDGIRRRSNRAGGVEGGMSTG.

It belongs to the chorismate synthase family. Homotetramer. The cofactor is FMNH2.

The enzyme catalyses 5-O-(1-carboxyvinyl)-3-phosphoshikimate = chorismate + phosphate. The protein operates within metabolic intermediate biosynthesis; chorismate biosynthesis; chorismate from D-erythrose 4-phosphate and phosphoenolpyruvate: step 7/7. In terms of biological role, catalyzes the anti-1,4-elimination of the C-3 phosphate and the C-6 proR hydrogen from 5-enolpyruvylshikimate-3-phosphate (EPSP) to yield chorismate, which is the branch point compound that serves as the starting substrate for the three terminal pathways of aromatic amino acid biosynthesis. This reaction introduces a second double bond into the aromatic ring system. The chain is Chorismate synthase from Thermobifida fusca (strain YX).